The chain runs to 378 residues: MSQALDYAKRLIAAPSVTPATGAVFDEMQAMLEPLGFAVHRFTRGEGEEGSDEAPVENLFAIRHGPEGSKHFAFAGHLDVVPPGEGWTSAPFEPEERGELLYGRGAVDMKGAIACMVDAVANVPQEAGTISFIITGDEEGPALHGTRALIDYMRSEGIKPDLCLVGEPTSVNRLGDMMKIGRRGSVNIWLEVEGTQGHVAYPHLAGNPLPAMVEILRELNNLPLDEGTDWFQPSNLEITEIDVPNRAHNVIPAKAKARISIRFNDTHSGASLSKQVIEIAEKHGGTARPVISGEPFLTEPGAFSSMIAAAVKAETAIDPEPSTTGGTSDARFLRSVCPVIEFGLCNATMHKRDEAVAMADLDTLSRIYARVAQAALSS.

Histidine 77 contacts Zn(2+). The active site involves aspartate 79. Position 108 (aspartate 108) interacts with Zn(2+). Glutamate 138 serves as the catalytic Proton acceptor. Residues glutamate 139, glutamate 167, and histidine 350 each contribute to the Zn(2+) site.

Belongs to the peptidase M20A family. DapE subfamily. Homodimer. The cofactor is Zn(2+). It depends on Co(2+) as a cofactor.

The enzyme catalyses N-succinyl-(2S,6S)-2,6-diaminopimelate + H2O = (2S,6S)-2,6-diaminopimelate + succinate. It functions in the pathway amino-acid biosynthesis; L-lysine biosynthesis via DAP pathway; LL-2,6-diaminopimelate from (S)-tetrahydrodipicolinate (succinylase route): step 3/3. Functionally, catalyzes the hydrolysis of N-succinyl-L,L-diaminopimelic acid (SDAP), forming succinate and LL-2,6-diaminopimelate (DAP), an intermediate involved in the bacterial biosynthesis of lysine and meso-diaminopimelic acid, an essential component of bacterial cell walls. The sequence is that of Succinyl-diaminopimelate desuccinylase from Erythrobacter litoralis (strain HTCC2594).